The following is a 199-amino-acid chain: HTH-type transcriptional regulator BetI (199 aa).

The HTH tetR-type domain occupies 8–68; the sequence is EIRKPQLVKA…ETMREILRQL (61 aa). The H-T-H motif DNA-binding region spans 31–50; that stretch reads SISLISKEAGVSTGIINHYF.

It functions in the pathway amine and polyamine biosynthesis; betaine biosynthesis via choline pathway [regulation]. Repressor involved in the biosynthesis of the osmoprotectant glycine betaine. It represses transcription of the choline transporter BetT and the genes of BetAB involved in the synthesis of glycine betaine. The chain is HTH-type transcriptional regulator BetI from Vibrio parahaemolyticus serotype O3:K6 (strain RIMD 2210633).